We begin with the raw amino-acid sequence, 242 residues long: Phosphoribosylaminoimidazole-succinocarboxamide synthase (242 aa).

Belongs to the SAICAR synthetase family.

It carries out the reaction 5-amino-1-(5-phospho-D-ribosyl)imidazole-4-carboxylate + L-aspartate + ATP = (2S)-2-[5-amino-1-(5-phospho-beta-D-ribosyl)imidazole-4-carboxamido]succinate + ADP + phosphate + 2 H(+). Its pathway is purine metabolism; IMP biosynthesis via de novo pathway; 5-amino-1-(5-phospho-D-ribosyl)imidazole-4-carboxamide from 5-amino-1-(5-phospho-D-ribosyl)imidazole-4-carboxylate: step 1/2. The sequence is that of Phosphoribosylaminoimidazole-succinocarboxamide synthase from Magnetococcus marinus (strain ATCC BAA-1437 / JCM 17883 / MC-1).